The chain runs to 103 residues: Large ribosomal subunit protein bL21 (103 aa).

This sequence belongs to the bacterial ribosomal protein bL21 family. As to quaternary structure, part of the 50S ribosomal subunit. Contacts protein L20.

This protein binds to 23S rRNA in the presence of protein L20. In Brevibacillus brevis (strain 47 / JCM 6285 / NBRC 100599), this protein is Large ribosomal subunit protein bL21.